Consider the following 443-residue polypeptide: Xaa-Pro dipeptidase (443 aa).

Residues D246, D257, H339, E384, and E423 each coordinate Mn(2+).

It belongs to the peptidase M24B family. Bacterial-type prolidase subfamily. The cofactor is Mn(2+).

It carries out the reaction Xaa-L-Pro dipeptide + H2O = an L-alpha-amino acid + L-proline. Splits dipeptides with a prolyl residue in the C-terminal position. The sequence is that of Xaa-Pro dipeptidase from Escherichia coli O157:H7.